Reading from the N-terminus, the 119-residue chain is Large ribosomal subunit protein bL20 (119 aa).

This sequence belongs to the bacterial ribosomal protein bL20 family.

Its function is as follows. Binds directly to 23S ribosomal RNA and is necessary for the in vitro assembly process of the 50S ribosomal subunit. It is not involved in the protein synthesizing functions of that subunit. In Clostridium acetobutylicum (strain ATCC 824 / DSM 792 / JCM 1419 / IAM 19013 / LMG 5710 / NBRC 13948 / NRRL B-527 / VKM B-1787 / 2291 / W), this protein is Large ribosomal subunit protein bL20.